The following is a 118-amino-acid chain: Large ribosomal subunit protein uL18 (118 aa).

It belongs to the universal ribosomal protein uL18 family. In terms of assembly, part of the 50S ribosomal subunit; part of the 5S rRNA/L5/L18/L25 subcomplex. Contacts the 5S and 23S rRNAs.

Its function is as follows. This is one of the proteins that bind and probably mediate the attachment of the 5S RNA into the large ribosomal subunit, where it forms part of the central protuberance. The sequence is that of Large ribosomal subunit protein uL18 from Campylobacter hominis (strain ATCC BAA-381 / DSM 21671 / CCUG 45161 / LMG 19568 / NCTC 13146 / CH001A).